Reading from the N-terminus, the 63-residue chain is Conotoxin p5a (63 aa).

Residues 1–19 (MRCLPVFVILLLLIPSAPC) form the signal peptide. A propeptide spanning residues 20 to 50 (VDAHPKTKDDMPLASFHDNAKGTLQRFWKKR) is cleaved from the precursor. 2 cysteine pairs are disulfide-bonded: Cys52–Cys59 and Cys53–Cys60. The residue at position 62 (Leu62) is a Leucine amide.

In terms of tissue distribution, expressed by the venom duct.

It is found in the secreted. In terms of biological role, in vivo, low levels of the peptide injected into male specimens of the Siamese fighting fish causes an immediate aggressive display in this fish in response to their reflection when placed in a mirrored aquarium; High levels of the peptide suppressed this behavior. No effect is observed when injected into mice. The chain is Conotoxin p5a from Conus purpurascens (Purple cone).